A 601-amino-acid chain; its full sequence is Protein FAM13C (601 aa).

2 disordered regions span residues 82–134 (SMGN…PQSS) and 192–238 (DGQV…EDLQ). Residues 98–111 (ESGRNHGESQETEH) are compositionally biased toward basic and acidic residues. A Phosphoserine modification is found at serine 130. Residues 200-217 (DPAPASTQSAPADSADPA) show a composition bias toward low complexity. Residue serine 258 is modified to Phosphoserine. 3 disordered regions span residues 268 to 304 (QRFN…KEPQ), 327 to 352 (FEQE…WMND), and 366 to 485 (KLSE…DPVS). Low complexity predominate over residues 282–294 (SSQQFMMPRSSSR). Positions 327-342 (FEQEKKYRPSHGDKTS) are enriched in basic and acidic residues. Phosphoserine occurs at positions 405 and 406. Basic and acidic residues predominate over residues 415-446 (VPEKREQTPPQDDGKGTKQDKNLIKPLYDRCR). Over residues 462 to 471 (QEEEDSDEDC) the composition is skewed to acidic residues.

Belongs to the FAM13 family.

This is Protein FAM13C (Fam13c) from Mus musculus (Mouse).